A 433-amino-acid chain; its full sequence is Serine hydroxymethyltransferase (433 aa).

Residues leucine 132 and 136 to 138 (GHL) contribute to the (6S)-5,6,7,8-tetrahydrofolate site. The residue at position 241 (lysine 241) is an N6-(pyridoxal phosphate)lysine.

The protein belongs to the SHMT family. As to quaternary structure, homodimer. Pyridoxal 5'-phosphate is required as a cofactor.

It is found in the cytoplasm. The catalysed reaction is (6R)-5,10-methylene-5,6,7,8-tetrahydrofolate + glycine + H2O = (6S)-5,6,7,8-tetrahydrofolate + L-serine. Its pathway is one-carbon metabolism; tetrahydrofolate interconversion. It functions in the pathway amino-acid biosynthesis; glycine biosynthesis; glycine from L-serine: step 1/1. Its function is as follows. Catalyzes the reversible interconversion of serine and glycine with tetrahydrofolate (THF) serving as the one-carbon carrier. This reaction serves as the major source of one-carbon groups required for the biosynthesis of purines, thymidylate, methionine, and other important biomolecules. Also exhibits THF-independent aldolase activity toward beta-hydroxyamino acids, producing glycine and aldehydes, via a retro-aldol mechanism. The sequence is that of Serine hydroxymethyltransferase from Methylobacterium sp. (strain 4-46).